A 187-amino-acid polypeptide reads, in one-letter code: MASTSDFKNGLVLQIEGQLWTIIEFQHVKPGKGPAFVRTKLKNVLSGKVVDKTFNAGVKVETATVDRRDMTYLYHDGSDYIFMDGDTYDQVSISESTVGDQSRFLLENMAVQVATHEDVPLFVELPVTVELVVKHTDPGLQGDRSTGGTKPATLETGAEINVPLFINTGDKLKVDSRDGNYLGRVNS.

The protein belongs to the elongation factor P family.

It is found in the cytoplasm. It functions in the pathway protein biosynthesis; polypeptide chain elongation. Involved in peptide bond synthesis. Stimulates efficient translation and peptide-bond synthesis on native or reconstituted 70S ribosomes in vitro. Probably functions indirectly by altering the affinity of the ribosome for aminoacyl-tRNA, thus increasing their reactivity as acceptors for peptidyl transferase. This is Elongation factor P from Rhodococcus erythropolis (strain PR4 / NBRC 100887).